Reading from the N-terminus, the 162-residue chain is Shikimate kinase (162 aa).

Position 11–16 (11–16) interacts with ATP; the sequence is GSGKSS. Ser15 is a binding site for Mg(2+). Substrate-binding residues include Asp33, Arg57, and Gly80. Arg116 is a binding site for ATP. Residue Arg132 participates in substrate binding.

The protein belongs to the shikimate kinase family. As to quaternary structure, monomer. Mg(2+) serves as cofactor.

It localises to the cytoplasm. The enzyme catalyses shikimate + ATP = 3-phosphoshikimate + ADP + H(+). Its pathway is metabolic intermediate biosynthesis; chorismate biosynthesis; chorismate from D-erythrose 4-phosphate and phosphoenolpyruvate: step 5/7. Its function is as follows. Catalyzes the specific phosphorylation of the 3-hydroxyl group of shikimic acid using ATP as a cosubstrate. The polypeptide is Shikimate kinase (Helicobacter pylori (strain P12)).